A 322-amino-acid chain; its full sequence is UDP-N-acetylenolpyruvoylglucosamine reductase (322 aa).

Residues 36–202 (RAGGPAQVLF…TSVLFEGVPG (167 aa)) form the FAD-binding PCMH-type domain. Arginine 182 is an active-site residue. Serine 231 functions as the Proton donor in the catalytic mechanism. Glutamate 301 is a catalytic residue.

The protein belongs to the MurB family. The cofactor is FAD.

The protein resides in the cytoplasm. It carries out the reaction UDP-N-acetyl-alpha-D-muramate + NADP(+) = UDP-N-acetyl-3-O-(1-carboxyvinyl)-alpha-D-glucosamine + NADPH + H(+). It functions in the pathway cell wall biogenesis; peptidoglycan biosynthesis. Functionally, cell wall formation. In Brucella abortus (strain S19), this protein is UDP-N-acetylenolpyruvoylglucosamine reductase.